Here is a 24-residue protein sequence, read N- to C-terminus: Cupiennin-5a (24 aa).

As to expression, expressed by the venom gland.

It localises to the secreted. This chain is Cupiennin-5a, found in Cupiennius salei (American wandering spider).